A 97-amino-acid polypeptide reads, in one-letter code: uncharacterized protein (97 aa).

An N-terminal signal peptide occupies residues 1 to 21; it reads MNKKFSISLLSTILAFLLVLG. A lipid anchor (N-palmitoyl cysteine) is attached at C22. Residue C22 is the site of S-diacylglycerol cysteine attachment.

This sequence to B.burgdorferi BBD15.

The protein localises to the cell membrane. This is an uncharacterized protein from Borreliella burgdorferi (strain ATCC 35210 / DSM 4680 / CIP 102532 / B31) (Borrelia burgdorferi).